Consider the following 446-residue polypeptide: Hercynine oxygenase (446 aa).

H51 serves as a coordination point for Fe cation. 87–90 lines the gamma-L-glutamyl-L-cysteine pocket; sequence RASR. Residues H134 and H138 each coordinate Fe cation. Gamma-L-glutamyl-L-cysteine-binding residues include D416 and R420.

Belongs to the EgtB family. In terms of assembly, monomer. The cofactor is Fe(2+).

The enzyme catalyses gamma-L-glutamyl-L-cysteine + hercynine + O2 = gamma-L-glutamyl-hercynylcysteine S-oxide + H2O. The protein operates within amino-acid biosynthesis; ergothioneine biosynthesis. Catalyzes the oxidative sulfurization of hercynine (N-alpha,N-alpha,N-alpha-trimethyl-L-histidine) into hercynyl-gamma-L-glutamyl-L-cysteine sulfoxide, a step in the biosynthesis pathway of ergothioneine. This is Hercynine oxygenase from Mycolicibacterium thermoresistibile (strain ATCC 19527 / DSM 44167 / CIP 105390 / JCM 6362 / NCTC 10409 / 316) (Mycobacterium thermoresistibile).